The following is a 139-amino-acid chain: FLYWCH family member 2 (139 aa).

2 disordered regions span residues 1–36 (MPQP…PRKP) and 86–139 (EAQR…STSP). The segment covering 98 to 107 (PEQKRSKQNL) has biased composition (basic and acidic residues). Residues 120-130 (VSSSSSEETTV) are compositionally biased toward low complexity.

This chain is FLYWCH family member 2 (Flywch2), found in Mus musculus (Mouse).